The primary structure comprises 226 residues: uncharacterized protein (226 aa).

Residues leucine 4 to valine 226 form the ABC transporter domain. Glycine 38–threonine 45 contributes to the ATP binding site.

It belongs to the ABC transporter superfamily.

This is an uncharacterized protein from Bacillus subtilis (strain 168).